Here is a 322-residue protein sequence, read N- to C-terminus: 4-hydroxythreonine-4-phosphate dehydrogenase (322 aa).

2 residues coordinate substrate: H126 and T127. H160, H205, and H260 together coordinate a divalent metal cation. Residues K268, N277, and R286 each coordinate substrate.

Belongs to the PdxA family. As to quaternary structure, homodimer. Zn(2+) is required as a cofactor. It depends on Mg(2+) as a cofactor. Requires Co(2+) as cofactor.

The protein localises to the cytoplasm. It carries out the reaction 4-(phosphooxy)-L-threonine + NAD(+) = 3-amino-2-oxopropyl phosphate + CO2 + NADH. The protein operates within cofactor biosynthesis; pyridoxine 5'-phosphate biosynthesis; pyridoxine 5'-phosphate from D-erythrose 4-phosphate: step 4/5. Its function is as follows. Catalyzes the NAD(P)-dependent oxidation of 4-(phosphooxy)-L-threonine (HTP) into 2-amino-3-oxo-4-(phosphooxy)butyric acid which spontaneously decarboxylates to form 3-amino-2-oxopropyl phosphate (AHAP). The protein is 4-hydroxythreonine-4-phosphate dehydrogenase of Paracoccus denitrificans (strain Pd 1222).